A 284-amino-acid chain; its full sequence is MTPSTPPRSRGTRYLAQPSGNTSSSALMQGQKTPQKPSQNLVPVTPSTTKSFKNAPLLAPPNSNMGMTSPFNGLTSPQRSPFPKSSVKRTLFQFESHDNGTVREEQEPLGRVNRILFPTQQNVDIDAAEEEEEGEVLLPPSRPTSARQLHLSLERDEFDQTHRKKIIKDVPGTPSDKVITFELAKNWNNNSPKNDARSQESEDEEDIIINPVRVGKNPFASDELVTQEIRNERKRAMLRENPDIEDVITYVNKKGEVVEKRRLTDEEKRRFKPKALFQSRDQEH.

Positions 1–89 (MTPSTPPRSR…SPFPKSSVKR (89 aa)) are disordered. T5 is subject to Phosphothreonine; by PHO85. 2 stretches are compositionally biased toward polar residues: residues 18 to 52 (PSGN…TKSF) and 61 to 79 (PNSN…SPQR). T33 bears the Phosphothreonine mark. The residue at position 76 (S76) is a Phosphoserine. The residue at position 173 (T173) is a Phosphothreonine. Phosphoserine occurs at positions 198 and 201. Lysine derivative occurs at positions 268, 272, and 274.

In terms of assembly, interacts with HOG1. Post-translationally, phosphorylated by cyclin-dependent kinases CDC28 and PHO85 in association with G1-cyclins, promoting degradation of SIC1 and exit form G1. In terms of processing, may contain a covalently attached chromophore. The N-terminus is blocked.

The protein resides in the cytoplasm. The protein localises to the nucleus. Functionally, substrate and inhibitor of the cyclin-dependent protein kinase CDC28. Its activity could be important for faithful segregation of chromosomes to daughter cells. It acts in response to a signal from a post-start checkpoint. The protein is Protein SIC1 (SIC1) of Saccharomyces cerevisiae (strain ATCC 204508 / S288c) (Baker's yeast).